The following is a 273-amino-acid chain: Large ribosomal subunit protein uL2 (273 aa).

The segment at 221–273 is disordered; sequence RGTAMNPVDHPHGGGEGRNFGKHPVSPWGVQTKGKKTRHNKRTDKYIVRRRGK. The span at 253-273 shows a compositional bias: basic residues; the sequence is KGKKTRHNKRTDKYIVRRRGK.

This sequence belongs to the universal ribosomal protein uL2 family. As to quaternary structure, part of the 50S ribosomal subunit. Forms a bridge to the 30S subunit in the 70S ribosome.

Its function is as follows. One of the primary rRNA binding proteins. Required for association of the 30S and 50S subunits to form the 70S ribosome, for tRNA binding and peptide bond formation. It has been suggested to have peptidyltransferase activity; this is somewhat controversial. Makes several contacts with the 16S rRNA in the 70S ribosome. The sequence is that of Large ribosomal subunit protein uL2 from Mannheimia succiniciproducens (strain KCTC 0769BP / MBEL55E).